Reading from the N-terminus, the 291-residue chain is Pantothenate synthetase (291 aa).

33 to 40 (MGALHEGH) provides a ligand contact to ATP. His-40 functions as the Proton donor in the catalytic mechanism. Gln-64 contributes to the (R)-pantoate binding site. A beta-alanine-binding site is contributed by Gln-64. ATP is bound at residue 157-160 (GEKD). Gln-163 lines the (R)-pantoate pocket. ATP is bound by residues Val-186 and 194 to 197 (LSSR).

This sequence belongs to the pantothenate synthetase family. As to quaternary structure, homodimer.

It localises to the cytoplasm. It catalyses the reaction (R)-pantoate + beta-alanine + ATP = (R)-pantothenate + AMP + diphosphate + H(+). It participates in cofactor biosynthesis; (R)-pantothenate biosynthesis; (R)-pantothenate from (R)-pantoate and beta-alanine: step 1/1. In terms of biological role, catalyzes the condensation of pantoate with beta-alanine in an ATP-dependent reaction via a pantoyl-adenylate intermediate. This is Pantothenate synthetase from Rubrobacter xylanophilus (strain DSM 9941 / JCM 11954 / NBRC 16129 / PRD-1).